Here is a 138-residue protein sequence, read N- to C-terminus: Small ribosomal subunit protein bS6 (138 aa).

Basic and acidic residues predominate over residues 97 to 121 (TEQSEMLKAEENRSERRERRDRPDN). The interval 97 to 138 (TEQSEMLKAEENRSERRERRDRPDNTDGSNENDSDSDNNADE) is disordered. Residues 126–138 (NENDSDSDNNADE) are compositionally biased toward acidic residues.

The protein belongs to the bacterial ribosomal protein bS6 family.

Its function is as follows. Binds together with bS18 to 16S ribosomal RNA. This chain is Small ribosomal subunit protein bS6, found in Stutzerimonas stutzeri (strain A1501) (Pseudomonas stutzeri).